A 108-amino-acid chain; its full sequence is Parvalbumin beta 1 (108 aa).

Ala1 carries the post-translational modification N-acetylalanine. 2 EF-hand domains span residues 38 to 73 and 77 to 108; these read KXXD…FCPK and LTDA…LVKQ. The Ca(2+) site is built by Asp51, Asp53, Ser55, Phe57, Glu59, Glu62, Asp90, Asp92, Asp94, Met96, and Glu101.

It belongs to the parvalbumin family.

In muscle, parvalbumin is thought to be involved in relaxation after contraction. It binds two calcium ions. This Oncorhynchus mykiss (Rainbow trout) protein is Parvalbumin beta 1.